The sequence spans 260 residues: DNA repair protein RecO (260 aa).

The protein belongs to the RecO family.

Involved in DNA repair and RecF pathway recombination. This chain is DNA repair protein RecO, found in Desulfosudis oleivorans (strain DSM 6200 / JCM 39069 / Hxd3) (Desulfococcus oleovorans).